The primary structure comprises 309 residues: UDP-URONIC ACID TRANSPORTER 1 (309 aa).

The next 10 membrane-spanning stretches (helical) occupy residues 9–29 (TLFI…VLLL), 43–63 (IFLT…SIVF), 78–98 (FLKV…GNIS), 104–124 (VSFN…FAYL), 131–151 (AWVT…ASGG), 152–172 (EPGF…ARAF), 193–213 (LMLY…LFME), 231–251 (WILL…NFLV), 256–278 (SALT…SILI), and 283–302 (VTVM…VAYG).

It belongs to the TPT transporter family. TPT (TC 2.A.7.9) subfamily. As to expression, ubiquitous.

The protein localises to the golgi apparatus membrane. Its function is as follows. UDP-glucuronic acid transporter that modulates the polysaccharide composition of seed mucilage. Transports UDP-glucuronic acid (UDP-GlcA) and UDP-galacturonic acid (UDP-GalA) in vitro. In Arabidopsis thaliana (Mouse-ear cress), this protein is UDP-URONIC ACID TRANSPORTER 1.